A 339-amino-acid polypeptide reads, in one-letter code: Dihydroorotate dehydrogenase (quinone) (339 aa).

FMN is bound by residues 64 to 68 and Thr88; that span reads AGADK. Lys68 contacts substrate. 113–117 contacts substrate; it reads NRNGF. FMN is bound by residues Asn141 and Asn174. Asn174 provides a ligand contact to substrate. The active-site Nucleophile is Ser177. A substrate-binding site is contributed by Asn179. Lys219 and Thr247 together coordinate FMN. 248 to 249 provides a ligand contact to substrate; it reads NT. Residues Gly270, Gly299, and 320–321 contribute to the FMN site; that span reads YS.

The protein belongs to the dihydroorotate dehydrogenase family. Type 2 subfamily. In terms of assembly, monomer. FMN is required as a cofactor.

The protein localises to the cell membrane. The catalysed reaction is (S)-dihydroorotate + a quinone = orotate + a quinol. The protein operates within pyrimidine metabolism; UMP biosynthesis via de novo pathway; orotate from (S)-dihydroorotate (quinone route): step 1/1. Its function is as follows. Catalyzes the conversion of dihydroorotate to orotate with quinone as electron acceptor. This is Dihydroorotate dehydrogenase (quinone) (pyrD) from Pasteurella multocida (strain Pm70).